A 92-amino-acid polypeptide reads, in one-letter code: Small ribosomal subunit protein uS19 (92 aa).

The protein belongs to the universal ribosomal protein uS19 family.

In terms of biological role, protein S19 forms a complex with S13 that binds strongly to the 16S ribosomal RNA. The polypeptide is Small ribosomal subunit protein uS19 (Bifidobacterium adolescentis (strain ATCC 15703 / DSM 20083 / NCTC 11814 / E194a)).